A 760-amino-acid polypeptide reads, in one-letter code: Catalase-peroxidase (760 aa).

The first 45 residues, 1-45 (MKGTPFRSPHLYQEGSSCMHRTIRSVAAVLTVVLSATIPMVPAWS), serve as a signal peptide directing secretion. A cross-link (tryptophyl-tyrosyl-methioninium (Trp-Tyr) (with M-271)) is located at residues 124–245 (WHGAGTYRTY…LAATQMGLIY (122 aa)). The active-site Proton acceptor is the His-125. Residues 245-271 (YVNPEGPNGVPDPVAAARDIREAFGGM) constitute a cross-link (tryptophyl-tyrosyl-methioninium (Tyr-Met) (with W-124)). A heme b-binding site is contributed by His-286.

The protein belongs to the peroxidase family. Peroxidase/catalase subfamily. In terms of assembly, homodimer or homotetramer. The cofactor is heme b. Formation of the three residue Trp-Tyr-Met cross-link is important for the catalase, but not the peroxidase activity of the enzyme.

The catalysed reaction is H2O2 + AH2 = A + 2 H2O. The enzyme catalyses 2 H2O2 = O2 + 2 H2O. In terms of biological role, bifunctional enzyme with both catalase and broad-spectrum peroxidase activity. The chain is Catalase-peroxidase from Granulibacter bethesdensis (strain ATCC BAA-1260 / CGDNIH1).